The primary structure comprises 168 residues: uncharacterized protein (168 aa).

Over residues 1–10 the composition is skewed to pro residues; it reads MSPTTGPQPN. Disordered stretches follow at residues 1–23 and 117–143; these read MSPT…TGPQ and EPGN…RGPQ.

This is an uncharacterized protein from Homo sapiens (Human).